The primary structure comprises 759 residues: Protein zyg-11 homolog A (759 aa).

LRR repeat units follow at residues 204-227 (LPRL…LTCK), 235-260 (MHYL…CLLH), and 490-513 (VTSI…FMAV).

It belongs to the zyg-11 family.

Probably acts as a target recruitment subunit in an E3 ubiquitin ligase complex ZYGA-CUL2-elongin BC. This Homo sapiens (Human) protein is Protein zyg-11 homolog A (ZYG11A).